Here is a 633-residue protein sequence, read N- to C-terminus: Phosphomethylpyrimidine synthase (633 aa).

Substrate contacts are provided by residues N245, M274, Y303, H339, S359–G361, D400–R403, and E439. Residue H443 participates in Zn(2+) binding. Position 466 (Y466) interacts with substrate. H507 contributes to the Zn(2+) binding site. [4Fe-4S] cluster contacts are provided by C587, C590, and C595.

It belongs to the ThiC family. As to quaternary structure, homodimer. [4Fe-4S] cluster serves as cofactor.

It carries out the reaction 5-amino-1-(5-phospho-beta-D-ribosyl)imidazole + S-adenosyl-L-methionine = 4-amino-2-methyl-5-(phosphooxymethyl)pyrimidine + CO + 5'-deoxyadenosine + formate + L-methionine + 3 H(+). The protein operates within cofactor biosynthesis; thiamine diphosphate biosynthesis. In terms of biological role, catalyzes the synthesis of the hydroxymethylpyrimidine phosphate (HMP-P) moiety of thiamine from aminoimidazole ribotide (AIR) in a radical S-adenosyl-L-methionine (SAM)-dependent reaction. The protein is Phosphomethylpyrimidine synthase of Neisseria meningitidis serogroup C / serotype 2a (strain ATCC 700532 / DSM 15464 / FAM18).